A 235-amino-acid polypeptide reads, in one-letter code: SMN complex subunit yip11/gem2 (235 aa).

Residues 1–34 (MPSKRKRNPLQYQTSGSLDEETNQRSAFPQIDNN) are disordered. The span at 24–34 (QRSAFPQIDNN) shows a compositional bias: polar residues. 2 positions are modified to phosphoserine: Ser117 and Ser118.

This sequence belongs to the gemin-2 family. In terms of assembly, part of the core SMN complex at least composed of smn1, yip11/gem2, gem6, gem7 and gem8. Interacts with smn1; the interaction is direct.

It is found in the nucleus. The SMN complex catalyzes the assembly of small nuclear ribonucleoproteins (snRNPs), the building blocks of the spliceosome, and thereby plays an important role in the splicing of cellular pre-mRNAs. Most spliceosomal snRNPs contain a common set of Sm proteins smb1, smd1, smd2, smd3, sme1, smf1 and smg1 that assemble in a heptameric protein ring on the Sm site of the small nuclear RNA to form the core snRNP. In the cytosol, the Sm proteins smd1, smd2, sme1, smf1 and smg1 (5Sm) are trapped in an inactive 6S pICln-Sm complex by the chaperone saf5. To complete assembly of core snRNPs, the SMN complex accepts 5Sm from saf5. Binding of snRNA inside 5Sm ultimately triggers eviction of the SMN complex, thereby allowing binding of smd3 and smb1 to complete assembly of the core snRNP. Within the SMN complex, yip11/gem2 constrains the conformation of 5Sm, thereby promoting 5Sm binding to snRNA containing the snRNP code (a nonameric Sm site and a 3'-adjacent stem-loop), thus preventing progression of assembly until a cognate substrate is bound. The sequence is that of SMN complex subunit yip11/gem2 (yip11) from Schizosaccharomyces pombe (strain 972 / ATCC 24843) (Fission yeast).